We begin with the raw amino-acid sequence, 273 residues long: Hydroxynaphthalene reductase arp2 (273 aa).

Ile-24, Asp-70, Asn-97, and Arg-130 together coordinate NADP(+). Active-site proton donor residues include Ser-146 and Ser-147. Residues Tyr-160, Lys-164, Val-193, and Ser-195 each contribute to the NADP(+) site. Tyr-160 (proton acceptor) is an active-site residue. The active-site Lowers pKa of active site Tyr is the Lys-164.

The protein belongs to the short-chain dehydrogenases/reductases (SDR) family.

The protein resides in the endosome. Its pathway is pigment biosynthesis; melanin biosynthesis. With respect to regulation, tricyclazole and pyroquilon inhibit arp2 hydroxynaphtalene reductase activity. Functionally, hydroxynaphthalene reductase; part of the gene cluster that mediates the biosynthesis of dihydroxynaphthalene (DHN)-melanin, a bluish-green pigment and a structural component of the conidial wall. The first step of the pathway is the production of the heptaketide naphtopyrone YWA1 by the polyketide synthase alb1 though condensation of acetyl-CoA with malonyl-CoA. The naphtopyrone YWA1 is then converted to the pentaketide 1,3,6,8-tetrahydroxynaphthalene (1,3,6,8-THN) by the heptaketide hydrolyase ayg1 though chain-length shortening. 1,3,6,8-THN is substrate of the hydroxynaphthalene reductase arp2 to yield scytalone. The scytalone dehydratase arp1 then reduces scytalone to 1,3,8-THN. 1,3,8-THN is also substrate of the hydroxynaphthalene reductase arp2 to yield vermelone. Vermelone is further converted by the multicopper oxidase abr1 to 1,8-DHN. Finally the laccase abr2 transforms 1,8-DHN to DHN-melanin. DHN-melanin biosynthesis appears to be initiated in endosomes where early enzymes (abl1, ayg1, arp1 and arp2) localize, with exocytosis leading to melanin deposition on the cell surface where late enzymes (abr1 and abr2) localize. DHN-melanin is an important structural component of the outer cell wall and is required for the presence of conidial surface hydrophobins. DHN-melanin also plays a crucial role in fungal virulence, including a protective role against the host's immune defenses. DHN-melanin also protects conidia against amoeba predation. This Aspergillus fumigatus (strain ATCC MYA-4609 / CBS 101355 / FGSC A1100 / Af293) (Neosartorya fumigata) protein is Hydroxynaphthalene reductase arp2.